A 728-amino-acid polypeptide reads, in one-letter code: Beta-galactosidase 12 (728 aa).

The N-terminal stretch at 1 to 27 (MGLNFREKAWILLGILCCSSLICSVKA) is a signal peptide. The active-site Proton donor is glutamate 185. Glutamate 254 acts as the Nucleophile in catalysis. N-linked (GlcNAc...) asparagine glycosylation is found at asparagine 255, asparagine 380, and asparagine 450.

It belongs to the glycosyl hydrolase 35 family. As to expression, ubiquitous, with higher expression levels in roots and siliques.

It localises to the secreted. The protein localises to the extracellular space. The protein resides in the apoplast. The enzyme catalyses Hydrolysis of terminal non-reducing beta-D-galactose residues in beta-D-galactosides.. This Arabidopsis thaliana (Mouse-ear cress) protein is Beta-galactosidase 12 (BGAL12).